The sequence spans 581 residues: Peptidyl-prolyl cis-trans isomerase FKBP10 (581 aa).

The first 33 residues, 1 to 33 (MFLVGSSSHTLHRLRILPLLLLLQTLERGLGRA), serve as a signal peptide directing secretion. PPIase FKBP-type domains lie at 61 to 149 (GDFV…LDVW), 173 to 261 (SDFV…LDVH), and 285 to 373 (GDFM…IDFH). N-linked (GlcNAc...) asparagine glycosylation is found at N69, N181, N293, N309, N351, N392, and N406. Residues 398-485 (GDFIRYHYNC…LFEVELVSRE (88 aa)) form the PPIase FKBP-type 4 domain. 2 EF-hand domains span residues 496–531 (WYQD…QVNE) and 541–576 (DPDK…DQER). Ca(2+)-binding residues include D509, N511, D513, E515, E520, D554, N556, D558, K560, and E565. Residues 533-581 (KGRLMPGQDPDKTISDMFQNQDRNQDGKITAEELKLKSDEDQERVHEEL) are disordered. The segment covering 555–581 (RNQDGKITAEELKLKSDEDQERVHEEL) has biased composition (basic and acidic residues). The short motif at 578–581 (HEEL) is the Prevents secretion from ER element.

Post-translationally, N-glycosylated. Phosphorylated. As to expression, expressed in aorta, brain, heart, kidney, lung, spleen and testis. Not detected in liver.

It localises to the endoplasmic reticulum lumen. The catalysed reaction is [protein]-peptidylproline (omega=180) = [protein]-peptidylproline (omega=0). Its activity is regulated as follows. Inhibited by both FK506 and rapamycin, but not by cyclosporin A. Functionally, PPIases accelerate the folding of proteins during protein synthesis. The chain is Peptidyl-prolyl cis-trans isomerase FKBP10 (Fkbp10) from Mus musculus (Mouse).